The following is a 155-amino-acid chain: Small ribosomal subunit protein uS7cz/uS7cy (155 aa).

This sequence belongs to the universal ribosomal protein uS7 family. As to quaternary structure, part of the 30S ribosomal subunit.

The protein resides in the plastid. The protein localises to the chloroplast. In terms of biological role, one of the primary rRNA binding proteins, it binds directly to 16S rRNA where it nucleates assembly of the head domain of the 30S subunit. The protein is Small ribosomal subunit protein uS7cz/uS7cy (rps7-A) of Oenothera argillicola (Appalachian evening primrose).